The primary structure comprises 303 residues: N-acetyl-D-glucosamine kinase (303 aa).

ATP contacts are provided by residues 4–11 (GFDIGGTK) and 133–140 (GVGGGLIF). Zn(2+) is bound by residues His-157, Cys-177, Cys-179, and Cys-184.

This sequence belongs to the ROK (NagC/XylR) family. NagK subfamily.

The enzyme catalyses N-acetyl-D-glucosamine + ATP = N-acetyl-D-glucosamine 6-phosphate + ADP + H(+). Its pathway is cell wall biogenesis; peptidoglycan recycling. In terms of biological role, catalyzes the phosphorylation of N-acetyl-D-glucosamine (GlcNAc) derived from cell-wall degradation, yielding GlcNAc-6-P. This chain is N-acetyl-D-glucosamine kinase, found in Escherichia coli O7:K1 (strain IAI39 / ExPEC).